We begin with the raw amino-acid sequence, 93 residues long: Parbolysin P2 (93 aa).

2 disulfides stabilise this stretch: cysteine 16–cysteine 37 and cysteine 22–cysteine 33.

It belongs to the worm cytolysin family. As to expression, localized within the skin and proboscis and are most readily isolated from body mucus secretions.

It is found in the secreted. Functionally, cytolysin that shows hemolytic activity (on bovine erythrocytes, HC(50)=5.75 mg/ml). This hemolytic activity is completely inhibited by small unilamelar vesicles composed of PC/PG, PC/PI and PC/PS in 1:1 molar ratios (with at least 100 mg/ml concentration). In Parborlasia corrugatus (Antarctic nemertean worm), this protein is Parbolysin P2.